Reading from the N-terminus, the 479-residue chain is Poly(A) polymerase catalytic subunit (479 aa).

Catalysis depends on residues aspartate 202 and aspartate 204. The Ca(2+) site is built by aspartate 202, aspartate 204, and aspartate 253.

The protein belongs to the poxviridae poly(A) polymerase catalytic subunit family. Heterodimer of a large (catalytic) subunit and a small (regulatory) subunit.

It carries out the reaction RNA(n) + ATP = RNA(n)-3'-adenine ribonucleotide + diphosphate. Its function is as follows. Polymerase that creates the 3'-poly(A) tail of mRNA's. The chain is Poly(A) polymerase catalytic subunit (OPG063) from Homo sapiens (Human).